The following is a 335-amino-acid chain: Nucleoid-associated protein KPN78578_25800 (335 aa).

This sequence belongs to the YejK family.

The protein resides in the cytoplasm. The protein localises to the nucleoid. This Klebsiella pneumoniae subsp. pneumoniae (strain ATCC 700721 / MGH 78578) protein is Nucleoid-associated protein KPN78578_25800.